We begin with the raw amino-acid sequence, 748 residues long: Catalase-peroxidase (748 aa).

Positions 92-238 (WHSAGTYRTG…LAAVQMGLIY (147 aa)) form a cross-link, tryptophyl-tyrosyl-methioninium (Trp-Tyr) (with M-264). His-93 (proton acceptor) is an active-site residue. The tryptophyl-tyrosyl-methioninium (Tyr-Met) (with W-92) cross-link spans 238-264 (YVNPEGPDGNPDPLLAAKDIRDTFGRM). His-279 is a binding site for heme b.

It belongs to the peroxidase family. Peroxidase/catalase subfamily. In terms of assembly, homodimer or homotetramer. The cofactor is heme b. Post-translationally, formation of the three residue Trp-Tyr-Met cross-link is important for the catalase, but not the peroxidase activity of the enzyme.

The catalysed reaction is H2O2 + AH2 = A + 2 H2O. The enzyme catalyses 2 H2O2 = O2 + 2 H2O. Functionally, bifunctional enzyme with both catalase and broad-spectrum peroxidase activity. The sequence is that of Catalase-peroxidase from Xanthomonas campestris pv. campestris (strain 8004).